The chain runs to 334 residues: GTP 3',8-cyclase (334 aa).

The region spanning 8 to 244 (RYGRPLRDLR…GEVAQRHAFA (237 aa)) is the Radical SAM core domain. Position 17 (arginine 17) interacts with GTP. [4Fe-4S] cluster is bound by residues cysteine 24 and cysteine 28. An S-adenosyl-L-methionine-binding site is contributed by tyrosine 30. Cysteine 31 contributes to the [4Fe-4S] cluster binding site. Arginine 70 contacts GTP. Glycine 74 lines the S-adenosyl-L-methionine pocket. Threonine 101 is a binding site for GTP. Position 125 (serine 125) interacts with S-adenosyl-L-methionine. Lysine 163 is a binding site for GTP. Methionine 197 serves as a coordination point for S-adenosyl-L-methionine. Residues cysteine 261 and cysteine 264 each coordinate [4Fe-4S] cluster. 266-268 (RAR) contacts GTP. Cysteine 278 contributes to the [4Fe-4S] cluster binding site.

This sequence belongs to the radical SAM superfamily. MoaA family. In terms of assembly, monomer and homodimer. [4Fe-4S] cluster serves as cofactor.

The catalysed reaction is GTP + AH2 + S-adenosyl-L-methionine = (8S)-3',8-cyclo-7,8-dihydroguanosine 5'-triphosphate + 5'-deoxyadenosine + L-methionine + A + H(+). The protein operates within cofactor biosynthesis; molybdopterin biosynthesis. Catalyzes the cyclization of GTP to (8S)-3',8-cyclo-7,8-dihydroguanosine 5'-triphosphate. This chain is GTP 3',8-cyclase, found in Xanthomonas axonopodis pv. citri (strain 306).